Consider the following 162-residue polypeptide: Protein-export protein SecB (162 aa).

The protein belongs to the SecB family. In terms of assembly, homotetramer, a dimer of dimers. One homotetramer interacts with 1 SecA dimer.

Its subcellular location is the cytoplasm. Its function is as follows. One of the proteins required for the normal export of preproteins out of the cell cytoplasm. It is a molecular chaperone that binds to a subset of precursor proteins, maintaining them in a translocation-competent state. It also specifically binds to its receptor SecA. The sequence is that of Protein-export protein SecB from Hamiltonella defensa subsp. Acyrthosiphon pisum (strain 5AT).